A 406-amino-acid polypeptide reads, in one-letter code: Ubiquitin-associated domain-containing protein 1 (406 aa).

A Ubiquitin-like domain is found at 14–98 (LRLHICSLDG…LLLVKKRAPP (85 aa)). The disordered stretch occupies residues 95–122 (RAPPPTPKMAEVSADEKRKQDQKAPDKD). The segment covering 108–122 (ADEKRKQDQKAPDKD) has biased composition (basic and acidic residues). The UBA 1 domain occupies 186-231 (EDDEDRVDEVALRQLTEMGFPESRAVKALRLNHMSVTQAMEWLIEH). Residues 238–257 (DAPLPCENSSEAAGGLATGE) are compositionally biased toward low complexity. Residues 238–272 (DAPLPCENSSEAAGGLATGEAETKPTLGAGAEDPK) are disordered. Residues 289-329 (RPDPRAVIALMEMGFDEKEVIDALRVNNNQQDAACEWLLGD) enclose the UBA 2 domain. The 40-residue stretch at 354 to 393 (NPVVQLGLTNPKTLLAFEDMLENPLNSTQWMNDPETGPVM) folds into the STI1 domain.

Component of the KPC complex.

Its subcellular location is the cytoplasm. The protein operates within protein modification; protein ubiquitination. In terms of biological role, non-catalytic component of the KPC complex, a E3 ubiquitin-protein ligase complex that mediates polyubiquitination of target proteins, such as CDKN1B and NFKB1. Within the KPC complex, UBAC1 acts as an adapter that promotes the transfer of target proteins that have been polyubiquitinated by RNF123/KPC1 to the 26S proteasome. This Xenopus tropicalis (Western clawed frog) protein is Ubiquitin-associated domain-containing protein 1 (ubac1).